Here is a 362-residue protein sequence, read N- to C-terminus: NAD(P)H-quinone oxidoreductase subunit 1, chloroplastic (362 aa).

The next 7 helical transmembrane spans lie at 26–48 (LIWI…VIVW), 97–119 (FSIG…PLGY), 126–148 (LSIG…LMAG), 163–185 (AAAQ…SLLS), 254–276 (LFYL…LYLG), 296–318 (IIGI…LFLF), and 338–360 (LGWK…FQLV).

This sequence belongs to the complex I subunit 1 family. As to quaternary structure, NDH is composed of at least 16 different subunits, 5 of which are encoded in the nucleus.

The protein localises to the plastid. It localises to the chloroplast thylakoid membrane. It carries out the reaction a plastoquinone + NADH + (n+1) H(+)(in) = a plastoquinol + NAD(+) + n H(+)(out). The enzyme catalyses a plastoquinone + NADPH + (n+1) H(+)(in) = a plastoquinol + NADP(+) + n H(+)(out). NDH shuttles electrons from NAD(P)H:plastoquinone, via FMN and iron-sulfur (Fe-S) centers, to quinones in the photosynthetic chain and possibly in a chloroplast respiratory chain. The immediate electron acceptor for the enzyme in this species is believed to be plastoquinone. Couples the redox reaction to proton translocation, and thus conserves the redox energy in a proton gradient. This chain is NAD(P)H-quinone oxidoreductase subunit 1, chloroplastic (ndhA), found in Zea mays (Maize).